A 371-amino-acid chain; its full sequence is Aspartate-semialdehyde dehydrogenase (371 aa).

NADP(+) is bound by residues 11 to 14 (RGMV), 38 to 39 (TS), and glutamine 75. Arginine 104 serves as a coordination point for phosphate. The active-site Acyl-thioester intermediate is the cysteine 137. Glutamine 164 is a substrate binding site. 167–168 (SG) contributes to the NADP(+) binding site. Glutamate 243 is a substrate binding site. Residue lysine 246 coordinates phosphate. Position 269 (arginine 269) interacts with substrate. Histidine 276 functions as the Proton acceptor in the catalytic mechanism. Residue glutamine 352 participates in NADP(+) binding.

This sequence belongs to the aspartate-semialdehyde dehydrogenase family. As to quaternary structure, homodimer.

The enzyme catalyses L-aspartate 4-semialdehyde + phosphate + NADP(+) = 4-phospho-L-aspartate + NADPH + H(+). It participates in amino-acid biosynthesis; L-lysine biosynthesis via DAP pathway; (S)-tetrahydrodipicolinate from L-aspartate: step 2/4. It functions in the pathway amino-acid biosynthesis; L-methionine biosynthesis via de novo pathway; L-homoserine from L-aspartate: step 2/3. The protein operates within amino-acid biosynthesis; L-threonine biosynthesis; L-threonine from L-aspartate: step 2/5. Its function is as follows. Catalyzes the NADPH-dependent formation of L-aspartate-semialdehyde (L-ASA) by the reductive dephosphorylation of L-aspartyl-4-phosphate. This is Aspartate-semialdehyde dehydrogenase from Buchnera aphidicola subsp. Acyrthosiphon pisum (strain APS) (Acyrthosiphon pisum symbiotic bacterium).